Reading from the N-terminus, the 292-residue chain is NAD kinase (292 aa).

Catalysis depends on aspartate 73, which acts as the Proton acceptor. Residues 73–74 (DG), 147–148 (NE), histidine 158, arginine 175, aspartate 177, 188–193 (TAYSLS), and glutamine 247 contribute to the NAD(+) site.

The protein belongs to the NAD kinase family. The cofactor is a divalent metal cation.

It is found in the cytoplasm. The enzyme catalyses NAD(+) + ATP = ADP + NADP(+) + H(+). Its function is as follows. Involved in the regulation of the intracellular balance of NAD and NADP, and is a key enzyme in the biosynthesis of NADP. Catalyzes specifically the phosphorylation on 2'-hydroxyl of the adenosine moiety of NAD to yield NADP. The sequence is that of NAD kinase from Erwinia tasmaniensis (strain DSM 17950 / CFBP 7177 / CIP 109463 / NCPPB 4357 / Et1/99).